The sequence spans 1423 residues: ABC transporter G family member 40 (1423 aa).

The span at 1-19 (MEGTSFHQASNSMRRNSSV) shows a compositional bias: polar residues. The disordered stretch occupies residues 1 to 36 (MEGTSFHQASNSMRRNSSVWKKDSGREIFSRSSREE). N-linked (GlcNAc...) asparagine glycosylation occurs at asparagine 16. Residues 20–34 (WKKDSGREIFSRSSR) show a composition bias toward basic and acidic residues. Residues 154–427 (LNTLHLVPNR…FETMGFKCPP (274 aa)) form the ABC transporter 1 domain. Residue 187–194 (GPPSSGKT) coordinates ATP. Asparagine 376 carries an N-linked (GlcNAc...) asparagine glycan. One can recognise an ABC transmembrane type-2 1 domain in the interval 505 to 718 (ELVKTSFSRE…GQNAILANEF (214 aa)). 6 consecutive transmembrane segments (helical) span residues 523–543 (FVYY…MTLF), 562–582 (ALFF…SMTI), 611–631 (IPIS…VIGF), 643–663 (ILLV…AALG), 667–687 (IVAN…GGVV), and 696–716 (WWIW…ILAN). N-linked (GlcNAc...) asparagine glycosylation is present at asparagine 729. The chain crosses the membrane as a helical span at residues 756–776 (GALLGFVVLFNFGFTLALTFL). The region spanning 825 to 1077 (ITFDNVVYSV…HLINYFESIQ (253 aa)) is the ABC transporter 2 domain. ATP is bound at residue 870 to 877 (GVSGAGKT). The N-linked (GlcNAc...) asparagine glycan is linked to asparagine 895. Threonine 962 is subject to Phosphothreonine. One can recognise an ABC transmembrane type-2 2 domain in the interval 1150–1364 (TQCMASLWKQ…TLYGLIASQF (215 aa)). Helical transmembrane passes span 1174-1194 (FLFT…LGGK), 1207-1227 (SMYT…QPVV), 1257-1277 (IPYV…MIGF), 1284-1304 (FFWY…YGMM), 1314-1334 (IASV…GFLI), and 1341-1361 (VWWE…GLIA). The N-linked (GlcNAc...) asparagine glycan is linked to asparagine 1375. A helical membrane pass occupies residues 1395–1415 (VVAAMNVIFPLLFAVIFAIGI).

The protein belongs to the ABC transporter superfamily. ABCG family. PDR (TC 3.A.1.205) subfamily. In terms of assembly, interacts with LECRK91 and LECRK92. Mostly observed in inflorescence meristems relative to cauline leaves and developing siliques. Ubiquitous with higher levels in leaves, stems and flowers. Also present in primary and lateral roots. In seeds, mainly expressed in the embryo and, to a lesser extent, in the endosperm.

The protein resides in the cell membrane. It catalyses the reaction abscisate(out) + ATP + H2O = abscisate(in) + ADP + phosphate + H(+). With respect to regulation, inhibited by glibenclamide, verapamil and vanadate (ABC transporters inhibitors). In terms of biological role, high affinity abscisic acid (ABA) transporter that mediates the import of ABA, with a preference for (+)-ABA, through the plasma membrane, especially in guard cells, and is involved in the intercellular and intracellular ABA signaling pathways leading, for example, to stomatal closure, thus conferring drought tolerance. Together with ABCG30, import into the embryo the ABA delivered from the endosperm via ABCG25 and ABCG31-mediated export to suppress radicle extension and subsequent embryonic growth. May be a general defense protein. Functions as a pump to exclude Pb(2+) ions and/or Pb(2+)-containing toxic compounds from the cytoplasm. Contributes to Pb(2+) ions resistance. Confers some resistance to the terpene sclareol. Functionally, (Microbial infection) Involved in resistance response to the pathogenic oomycetes Phytophthora infestans and Phytophthora capsici. This is ABC transporter G family member 40 from Arabidopsis thaliana (Mouse-ear cress).